We begin with the raw amino-acid sequence, 158 residues long: Cyclic pyranopterin monophosphate synthase (158 aa).

Substrate is bound by residues 74 to 76 and 112 to 113; these read MCH and ME. D127 is a catalytic residue.

This sequence belongs to the MoaC family. Homohexamer; trimer of dimers.

It carries out the reaction (8S)-3',8-cyclo-7,8-dihydroguanosine 5'-triphosphate = cyclic pyranopterin phosphate + diphosphate. It functions in the pathway cofactor biosynthesis; molybdopterin biosynthesis. Catalyzes the conversion of (8S)-3',8-cyclo-7,8-dihydroguanosine 5'-triphosphate to cyclic pyranopterin monophosphate (cPMP). The polypeptide is Cyclic pyranopterin monophosphate synthase (Helicobacter pylori (strain ATCC 700392 / 26695) (Campylobacter pylori)).